Reading from the N-terminus, the 366-residue chain is GDSL esterase/lipase At1g74460 (366 aa).

An N-terminal signal peptide occupies residues 1–20; it reads MKFCAIFVLFIVLAINGYDC. The active-site Nucleophile is Ser-30. Residues Asn-113 and Asn-260 are each glycosylated (N-linked (GlcNAc...) asparagine). Residues Asp-320 and His-323 contribute to the active site.

The protein belongs to the 'GDSL' lipolytic enzyme family.

The protein resides in the secreted. This chain is GDSL esterase/lipase At1g74460, found in Arabidopsis thaliana (Mouse-ear cress).